Here is a 540-residue protein sequence, read N- to C-terminus: Hydroxylamine reductase (540 aa).

Residues Cys-3, Cys-6, Cys-15, and Cys-21 each contribute to the [4Fe-4S] cluster site. Hybrid [4Fe-2O-2S] cluster is bound by residues His-236, Glu-260, Cys-304, Cys-395, Cys-423, Cys-448, Glu-483, and Lys-485. Cys-395 is modified (cysteine persulfide).

This sequence belongs to the HCP family. Requires [4Fe-4S] cluster as cofactor. The cofactor is hybrid [4Fe-2O-2S] cluster.

The protein localises to the cytoplasm. The enzyme catalyses A + NH4(+) + H2O = hydroxylamine + AH2 + H(+). Its function is as follows. Catalyzes the reduction of hydroxylamine to form NH(3) and H(2)O. The sequence is that of Hydroxylamine reductase from Methanosarcina mazei (strain ATCC BAA-159 / DSM 3647 / Goe1 / Go1 / JCM 11833 / OCM 88) (Methanosarcina frisia).